The chain runs to 440 residues: MSAYEYPRLSRSDIITALKDAQIASVTETDLKTPTSDFVSELYTRILIYLDALDEEEKGQVDFEALEQLENPDHHATSMQAMKLYCKVKDMLEMLDCPLPISFKDLLRPESSRTEFFISALLNYGLYKDSKMDLIRPKAEELGLLDEQRKQCEAKVAQLNAEIGEFDEAVERDLPFVQELEANIEQLNKKILELNNQQMSLRATFQKMREKSTQMDNEISKAEFDLVETVQENANLRSQIVQSPDKLQGALEEKKLVLGETKKAEQSAMVTFQEKAAILEVFEKALKKILKSSSQLQLINEQVTNAKTVEKEFKALKDKLSEDGVAYKSLEAKVVERERIVEQLNESLKQLEKEKAVMFDDWTKQLNELKVEVESRRRELETRQTNVESVVAMVDDNTAKTNQVRQSGEAKVKKLAAKYEEIVKQFHEYTVSFDAFLPSL.

2 coiled-coil regions span residues 142–239 (LGLL…LRSQ) and 299–386 (INEQ…RQTN).

This sequence belongs to the NUF2 family. Component of the NDC80 complex, which consists of NDC80, NUF2, SPC24 and SPC25.

It is found in the chromosome. The protein localises to the centromere. Acts as a component of the essential kinetochore-associated NDC80 complex, which is required for chromosome segregation and spindle checkpoint activity to ensure proper cell division. The sequence is that of Kinetochore protein NUF2 homolog from Arabidopsis thaliana (Mouse-ear cress).